A 194-amino-acid chain; its full sequence is HTH-type transcriptional regulator BetI (194 aa).

Positions 8-68 (EIRRAQLIDA…ATMRHVLRDL (61 aa)) constitute an HTH tetR-type domain. Positions 31-50 (TLASVAQRANISTGIVSHYF) form a DNA-binding region, H-T-H motif.

The protein operates within amine and polyamine biosynthesis; betaine biosynthesis via choline pathway [regulation]. Its function is as follows. Repressor involved in the biosynthesis of the osmoprotectant glycine betaine. It represses transcription of the choline transporter BetT and the genes of BetAB involved in the synthesis of glycine betaine. The sequence is that of HTH-type transcriptional regulator BetI from Burkholderia cenocepacia (strain HI2424).